A 228-amino-acid chain; its full sequence is Putative N-acetylmannosamine-6-phosphate 2-epimerase (228 aa).

This sequence belongs to the NanE family.

The enzyme catalyses an N-acyl-D-glucosamine 6-phosphate = an N-acyl-D-mannosamine 6-phosphate. Its pathway is amino-sugar metabolism; N-acetylneuraminate degradation; D-fructose 6-phosphate from N-acetylneuraminate: step 3/5. Functionally, converts N-acetylmannosamine-6-phosphate (ManNAc-6-P) to N-acetylglucosamine-6-phosphate (GlcNAc-6-P). The sequence is that of Putative N-acetylmannosamine-6-phosphate 2-epimerase from Mycoplasmopsis pulmonis (strain UAB CTIP) (Mycoplasma pulmonis).